A 411-amino-acid polypeptide reads, in one-letter code: Squalene synthase (411 aa).

NADP(+) contacts are provided by arginine 49 and arginine 74. Residues aspartate 77, glutamate 80, and aspartate 81 each coordinate Mg(2+). Arginine 212, lysine 312, and arginine 314 together coordinate NADP(+). A helical transmembrane segment spans residues serine 388–glycine 408.

It belongs to the phytoene/squalene synthase family. Mg(2+) serves as cofactor.

The protein localises to the membrane. It catalyses the reaction 2 (2E,6E)-farnesyl diphosphate + NADH + H(+) = squalene + 2 diphosphate + NAD(+). The enzyme catalyses 2 (2E,6E)-farnesyl diphosphate + NADPH + H(+) = squalene + 2 diphosphate + NADP(+). Converts farnesyl diphosphate (FPP) into squalene, a precursor for sterol biosynthesis in eukaryotes. This is Squalene synthase from Solanum lycopersicum (Tomato).